A 435-amino-acid chain; its full sequence is Homoserine dehydrogenase (435 aa).

NADPH contacts are provided by Thr13, Val14, Arg43, and Lys105. Residue Val14 participates in NAD(+) binding. Residues Val14, Arg43, and Lys105 each coordinate NADP(+). Positions 129, 132, 134, and 136 each coordinate Na(+). Lys204 serves as the catalytic Proton donor. Disordered stretches follow at residues 255-274 and 377-402; these read ARGV…TPDR and RCDD…PDHV. Composition is skewed to basic and acidic residues over residues 262 to 274 and 377 to 391; these read RAPD…TPDR and RCDD…AERR.

It belongs to the homoserine dehydrogenase family. Requires a metal cation as cofactor.

The catalysed reaction is L-homoserine + NADP(+) = L-aspartate 4-semialdehyde + NADPH + H(+). The enzyme catalyses L-homoserine + NAD(+) = L-aspartate 4-semialdehyde + NADH + H(+). Its pathway is amino-acid biosynthesis; L-methionine biosynthesis via de novo pathway; L-homoserine from L-aspartate: step 3/3. It functions in the pathway amino-acid biosynthesis; L-threonine biosynthesis; L-threonine from L-aspartate: step 3/5. In terms of biological role, catalyzes the conversion of L-aspartate-beta-semialdehyde (L-Asa) to L-homoserine (L-Hse), the third step in the biosynthesis of threonine and methionine from aspartate. This Methylobacillus glycogenes protein is Homoserine dehydrogenase (hom).